The primary structure comprises 149 residues: Large ribosomal subunit protein uL11 (149 aa).

Belongs to the universal ribosomal protein uL11 family. Part of the ribosomal stalk of the 50S ribosomal subunit. Interacts with L10 and the large rRNA to form the base of the stalk. L10 forms an elongated spine to which L12 dimers bind in a sequential fashion forming a multimeric L10(L12)X complex. Post-translationally, one or more lysine residues are methylated.

Its function is as follows. Forms part of the ribosomal stalk which helps the ribosome interact with GTP-bound translation factors. The polypeptide is Large ribosomal subunit protein uL11 (Methylobacterium nodulans (strain LMG 21967 / CNCM I-2342 / ORS 2060)).